The primary structure comprises 274 residues: Nitrogenase iron protein (274 aa).

8-15 (GKGGIGKS) contributes to the ATP binding site. Cysteine 94 serves as a coordination point for [4Fe-4S] cluster. ADP-ribosylarginine; by dinitrogenase reductase ADP-ribosyltransferase is present on arginine 97. Cysteine 131 provides a ligand contact to [4Fe-4S] cluster.

The protein belongs to the NifH/BchL/ChlL family. Homodimer. It depends on [4Fe-4S] cluster as a cofactor. The reversible ADP-ribosylation of Arg-97 inactivates the nitrogenase reductase and regulates nitrogenase activity.

The catalysed reaction is N2 + 8 reduced [2Fe-2S]-[ferredoxin] + 16 ATP + 16 H2O = H2 + 8 oxidized [2Fe-2S]-[ferredoxin] + 2 NH4(+) + 16 ADP + 16 phosphate + 6 H(+). The key enzymatic reactions in nitrogen fixation are catalyzed by the nitrogenase complex, which has 2 components: the iron protein and the molybdenum-iron protein. This is Nitrogenase iron protein from Chlorobium limicola (strain DSM 245 / NBRC 103803 / 6330).